The primary structure comprises 155 residues: SsrA-binding protein (155 aa).

This sequence belongs to the SmpB family.

It localises to the cytoplasm. Its function is as follows. Required for rescue of stalled ribosomes mediated by trans-translation. Binds to transfer-messenger RNA (tmRNA), required for stable association of tmRNA with ribosomes. tmRNA and SmpB together mimic tRNA shape, replacing the anticodon stem-loop with SmpB. tmRNA is encoded by the ssrA gene; the 2 termini fold to resemble tRNA(Ala) and it encodes a 'tag peptide', a short internal open reading frame. During trans-translation Ala-aminoacylated tmRNA acts like a tRNA, entering the A-site of stalled ribosomes, displacing the stalled mRNA. The ribosome then switches to translate the ORF on the tmRNA; the nascent peptide is terminated with the 'tag peptide' encoded by the tmRNA and targeted for degradation. The ribosome is freed to recommence translation, which seems to be the essential function of trans-translation. In Lawsonia intracellularis (strain PHE/MN1-00), this protein is SsrA-binding protein.